The sequence spans 359 residues: Dual-specificity RNA methyltransferase RlmN 1 (359 aa).

The active-site Proton acceptor is the Glu-96. The Radical SAM core domain maps to 102-335; sequence FKGRATVCIS…STVRQRRGID (234 aa). A disulfide bridge links Cys-109 with Cys-340. Residues Cys-116, Cys-120, and Cys-123 each coordinate [4Fe-4S] cluster. Residues 166–167, Ser-198, 221–223, and Asn-297 contribute to the S-adenosyl-L-methionine site; these read GE and SLH. Cys-340 functions as the S-methylcysteine intermediate in the catalytic mechanism.

Belongs to the radical SAM superfamily. RlmN family. The cofactor is [4Fe-4S] cluster.

It localises to the cytoplasm. It carries out the reaction adenosine(2503) in 23S rRNA + 2 reduced [2Fe-2S]-[ferredoxin] + 2 S-adenosyl-L-methionine = 2-methyladenosine(2503) in 23S rRNA + 5'-deoxyadenosine + L-methionine + 2 oxidized [2Fe-2S]-[ferredoxin] + S-adenosyl-L-homocysteine. It catalyses the reaction adenosine(37) in tRNA + 2 reduced [2Fe-2S]-[ferredoxin] + 2 S-adenosyl-L-methionine = 2-methyladenosine(37) in tRNA + 5'-deoxyadenosine + L-methionine + 2 oxidized [2Fe-2S]-[ferredoxin] + S-adenosyl-L-homocysteine. Its function is as follows. Specifically methylates position 2 of adenine 2503 in 23S rRNA and position 2 of adenine 37 in tRNAs. m2A2503 modification seems to play a crucial role in the proofreading step occurring at the peptidyl transferase center and thus would serve to optimize ribosomal fidelity. This Myxococcus xanthus (strain DK1622) protein is Dual-specificity RNA methyltransferase RlmN 1.